A 243-amino-acid polypeptide reads, in one-letter code: Adenylate dimethylallyltransferase (243 aa).

It catalyses the reaction dimethylallyl diphosphate + AMP = N(6)-(dimethylallyl)adenosine 5'-phosphate + diphosphate. Its function is as follows. Transfers dimethylallyl groups to AMP as part of the biosynthesis of cytokinin phytohormones. The protein is Adenylate dimethylallyltransferase (tzs) of Agrobacterium tumefaciens (strain T37).